Here is a 443-residue protein sequence, read N- to C-terminus: Lysine-specific demethylase 8 (443 aa).

The segment covering 139–165 (TKLEAERGVREPGLESSKLHSPGEHSN) has biased composition (basic and acidic residues). Residues 139-174 (TKLEAERGVREPGLESSKLHSPGEHSNKKSFASVTG) are disordered. Residues 298-443 (GYLAQHQLFE…LSFSVSFWWS (146 aa)) enclose the JmjC domain. His-348, Asp-350, and His-427 together coordinate Fe cation.

Fe(2+) serves as cofactor.

It localises to the nucleus. The catalysed reaction is N(6),N(6)-dimethyl-L-lysyl(36)-[histone H3] + 2 2-oxoglutarate + 2 O2 = L-lysyl(36)-[histone H3] + 2 formaldehyde + 2 succinate + 2 CO2. Functionally, histone demethylase required for G2/M phase cell cycle progression. Specifically demethylates dimethylated 'Lys-36' (H3K36me2) of histone H3, an epigenetic repressive mark, thereby acting as a transcription activator. May play a role in the regulation of the circadian clock. The chain is Lysine-specific demethylase 8 (kdm8) from Xenopus tropicalis (Western clawed frog).